The following is a 338-amino-acid chain: Heat-inducible transcription repressor HrcA (338 aa).

The protein belongs to the HrcA family.

In terms of biological role, negative regulator of class I heat shock genes (grpE-dnaK-dnaJ and groELS operons). Prevents heat-shock induction of these operons. This chain is Heat-inducible transcription repressor HrcA, found in Bacillus cereus (strain B4264).